We begin with the raw amino-acid sequence, 104 residues long: Large ribosomal subunit protein uL24 (104 aa).

Belongs to the universal ribosomal protein uL24 family. As to quaternary structure, part of the 50S ribosomal subunit.

One of two assembly initiator proteins, it binds directly to the 5'-end of the 23S rRNA, where it nucleates assembly of the 50S subunit. Its function is as follows. One of the proteins that surrounds the polypeptide exit tunnel on the outside of the subunit. This is Large ribosomal subunit protein uL24 from Shewanella loihica (strain ATCC BAA-1088 / PV-4).